A 312-amino-acid chain; its full sequence is Speedy protein A (312 aa).

The interval 67–199 (RQEMTAFFKL…SHYIWQRERS (133 aa)) is speedy/Ringo box; Required for CDK-binding. A Phosphoserine modification is found at serine 221. Threonine 223 carries the phosphothreonine modification.

It belongs to the Speedy/Ringo family. Interacts with CDK1. Interacts with CDK2. May interact with CDKN1B/KIP1. Identified in a complex with CDK2 and CDKN1B/KIP1, where it interacts primarily with CDK2.

It localises to the nucleus. In terms of biological role, regulates the G1/S phase transition of the cell cycle by binding and activating CDK1 and CDK2. Contributes to CDK2 activation without promoting CDK2 phosphorylation, by inducing a conformation change of the CDK2 T-loop that obstructs the substrate-binding cleft prior to kinase activation. Interferes with CDKN1B-mediated inhibition of CDK2. Mediates cell survival during the DNA damage process through activation of CDK2. The sequence is that of Speedy protein A from Rattus norvegicus (Rat).